A 118-amino-acid chain; its full sequence is Large ribosomal subunit protein bL20 (118 aa).

It belongs to the bacterial ribosomal protein bL20 family.

In terms of biological role, binds directly to 23S ribosomal RNA and is necessary for the in vitro assembly process of the 50S ribosomal subunit. It is not involved in the protein synthesizing functions of that subunit. This is Large ribosomal subunit protein bL20 from Fervidobacterium nodosum (strain ATCC 35602 / DSM 5306 / Rt17-B1).